The primary structure comprises 466 residues: Membrane-bound lytic murein transglycosylase F (466 aa).

A signal peptide spans 1 to 24; it reads MKRFKLNYFIIGLIAILLTWSLWT. Residues 25–268 form a non-LT domain region; sequence TVPWRNAHQD…RLEEKYLGHV (244 aa). The tract at residues 269-466 is LT domain; it reads GGFDYVDTKT…KEKKAAQLAD (198 aa). Glu-313 is an active-site residue.

This sequence in the N-terminal section; belongs to the bacterial solute-binding protein 3 family. In the C-terminal section; belongs to the transglycosylase Slt family.

The protein resides in the cell outer membrane. It carries out the reaction Exolytic cleavage of the (1-&gt;4)-beta-glycosidic linkage between N-acetylmuramic acid (MurNAc) and N-acetylglucosamine (GlcNAc) residues in peptidoglycan, from either the reducing or the non-reducing ends of the peptidoglycan chains, with concomitant formation of a 1,6-anhydrobond in the MurNAc residue.. Functionally, murein-degrading enzyme that degrades murein glycan strands and insoluble, high-molecular weight murein sacculi, with the concomitant formation of a 1,6-anhydromuramoyl product. Lytic transglycosylases (LTs) play an integral role in the metabolism of the peptidoglycan (PG) sacculus. Their lytic action creates space within the PG sacculus to allow for its expansion as well as for the insertion of various structures such as secretion systems and flagella. The protein is Membrane-bound lytic murein transglycosylase F of Sodalis glossinidius (strain morsitans).